A 705-amino-acid chain; its full sequence is GATOR2 complex protein WDR24 (705 aa).

WD repeat units lie at residues 1–28, 34–74, 77–117, 121–161, 165–207, and 211–254; these read MDEN…RNKQ, EHKR…SVST, GQSE…RYER, AHNG…AKEI, QTIA…IPSA, and EHKD…IDRA. A C4-type zinc finger spans residues 633-655; that stretch reads NCSNCKRPMSNRGWICDRCRQCA. Zn(2+) is bound by residues cysteine 634, cysteine 637, cysteine 648, cysteine 651, cysteine 658, cysteine 661, cysteine 672, cysteine 675, histidine 677, histidine 680, histidine 683, cysteine 694, cysteine 698, histidine 700, and cysteine 702. An RING-type; atypical zinc finger spans residues 656–705; sequence SMCAVCHHVVKGLFVWCQGCSHGGHLQHIMKWLETSSHCPAGCGHLCEYT.

This sequence belongs to the WD repeat WDR24 family. Component of the GATOR2 subcomplex, composed of MIOS, SEC13, SEH1L, WDR24 and WDR59. The GATOR2 complex interacts with CASTOR1 and CASTOR2; the interaction is negatively regulated by arginine. The GATOR2 complex interacts with SESN1, SESN2 and SESN3; the interaction is negatively regulated by amino acids.

It localises to the lysosome membrane. The enzyme catalyses S-ubiquitinyl-[E2 ubiquitin-conjugating enzyme]-L-cysteine + [acceptor protein]-L-lysine = [E2 ubiquitin-conjugating enzyme]-L-cysteine + N(6)-ubiquitinyl-[acceptor protein]-L-lysine.. It participates in protein modification; protein ubiquitination. Its activity is regulated as follows. The GATOR2 complex is negatively regulated by the upstream amino acid sensors CASTOR1 and SESN2, which sequester the GATOR2 complex in absence of amino acids. In the presence of abundant amino acids, GATOR2 is released from CASTOR1 and SESN2 and activated. Catalytic component of the GATOR2 complex, a multiprotein complex that acts as an activator of the amino acid-sensing branch of the mTORC1 signaling pathway. The GATOR2 complex indirectly activates mTORC1 through the inhibition of the GATOR1 subcomplex. GATOR2 probably acts as an E3 ubiquitin-protein ligase toward GATOR1. In the presence of abundant amino acids, the GATOR2 complex mediates ubiquitination of the NPRL2 core component of the GATOR1 complex, leading to GATOR1 inactivation. In the absence of amino acids, GATOR2 is inhibited, activating the GATOR1 complex. In addition to its role in regulation of the mTORC1 complex, promotes the acidification of lysosomes and facilitates autophagic flux. Within the GATOR2 complex, WDR24 constitutes the catalytic subunit that mediates 'Lys-6'-linked ubiquitination of NPRL2. The polypeptide is GATOR2 complex protein WDR24 (Gallus gallus (Chicken)).